Reading from the N-terminus, the 147-residue chain is 3-dehydroquinate dehydratase 1 (147 aa).

The active-site Proton acceptor is Tyr-23. Residues Asn-75, His-81, and Asp-88 each contribute to the substrate site. Catalysis depends on His-101, which acts as the Proton donor. Substrate-binding positions include 102–103 (LS) and Arg-112.

The protein belongs to the type-II 3-dehydroquinase family. As to quaternary structure, homododecamer.

The catalysed reaction is 3-dehydroquinate = 3-dehydroshikimate + H2O. Its pathway is metabolic intermediate biosynthesis; chorismate biosynthesis; chorismate from D-erythrose 4-phosphate and phosphoenolpyruvate: step 3/7. Catalyzes a trans-dehydration via an enolate intermediate. The sequence is that of 3-dehydroquinate dehydratase 1 (aroQ1) from Pseudomonas aeruginosa (strain ATCC 15692 / DSM 22644 / CIP 104116 / JCM 14847 / LMG 12228 / 1C / PRS 101 / PAO1).